The primary structure comprises 287 residues: ATP phosphoribosyltransferase (287 aa).

It belongs to the ATP phosphoribosyltransferase family. Long subfamily. In terms of assembly, equilibrium between an active dimeric form, an inactive hexameric form and higher aggregates. Interconversion between the various forms is largely reversible and is influenced by the natural substrates and inhibitors of the enzyme. Mg(2+) is required as a cofactor.

It is found in the cytoplasm. The catalysed reaction is 1-(5-phospho-beta-D-ribosyl)-ATP + diphosphate = 5-phospho-alpha-D-ribose 1-diphosphate + ATP. It functions in the pathway amino-acid biosynthesis; L-histidine biosynthesis; L-histidine from 5-phospho-alpha-D-ribose 1-diphosphate: step 1/9. Its activity is regulated as follows. Feedback inhibited by histidine. In terms of biological role, catalyzes the condensation of ATP and 5-phosphoribose 1-diphosphate to form N'-(5'-phosphoribosyl)-ATP (PR-ATP). Has a crucial role in the pathway because the rate of histidine biosynthesis seems to be controlled primarily by regulation of HisG enzymatic activity. In Mycobacterium leprae (strain TN), this protein is ATP phosphoribosyltransferase (hisG).